The following is a 496-amino-acid chain: L-arabinose isomerase (496 aa).

Mn(2+) contacts are provided by glutamate 306, glutamate 331, histidine 348, and histidine 447.

Belongs to the arabinose isomerase family. The cofactor is Mn(2+).

The enzyme catalyses beta-L-arabinopyranose = L-ribulose. Its pathway is carbohydrate degradation; L-arabinose degradation via L-ribulose; D-xylulose 5-phosphate from L-arabinose (bacterial route): step 1/3. In terms of biological role, catalyzes the conversion of L-arabinose to L-ribulose. The sequence is that of L-arabinose isomerase from Geobacillus kaustophilus (strain HTA426).